The primary structure comprises 300 residues: Hemagglutinin 1 (300 aa).

Residues 200-221 form a helical membrane-spanning segment; sequence FIFATVVFIFLQAGRVPEIIAD.

It is found in the cell membrane. In terms of biological role, induces agglutination of neuraminidase-treated erythrocytes. The chain is Hemagglutinin 1 (hag1) from Eikenella corrodens.